Reading from the N-terminus, the 239-residue chain is Protein TIPIN homolog (239 aa).

Acidic residues-rich tracts occupy residues 1-14 and 156-166; these read MDEM…DELD and DGADDDEDDLF. Disordered regions lie at residues 1–38 and 135–239; these read MDEM…RRII and ESTD…NNDW. Composition is skewed to basic and acidic residues over residues 169 to 193 and 206 to 223; these read LPEK…EKKN and YRMM…AREA. Residues 224–239 are compositionally biased toward acidic residues; the sequence is EAEDELMEDFDLNNDW.

The protein belongs to the CSM3 family.

Its subcellular location is the cytoplasm. It localises to the nucleus. Required for normal progression of S-phase. Important for cell survival after DNA damage or replication stress. The polypeptide is Protein TIPIN homolog (Caenorhabditis briggsae).